Reading from the N-terminus, the 377-residue chain is Succinyl-diaminopimelate desuccinylase (377 aa).

Residue histidine 66 coordinates Zn(2+). Aspartate 68 is an active-site residue. Aspartate 99 provides a ligand contact to Zn(2+). Glutamate 133 functions as the Proton acceptor in the catalytic mechanism. Zn(2+) contacts are provided by glutamate 134, glutamate 162, and histidine 348.

Belongs to the peptidase M20A family. DapE subfamily. As to quaternary structure, homodimer. Requires Zn(2+) as cofactor. The cofactor is Co(2+).

The enzyme catalyses N-succinyl-(2S,6S)-2,6-diaminopimelate + H2O = (2S,6S)-2,6-diaminopimelate + succinate. The protein operates within amino-acid biosynthesis; L-lysine biosynthesis via DAP pathway; LL-2,6-diaminopimelate from (S)-tetrahydrodipicolinate (succinylase route): step 3/3. Catalyzes the hydrolysis of N-succinyl-L,L-diaminopimelic acid (SDAP), forming succinate and LL-2,6-diaminopimelate (DAP), an intermediate involved in the bacterial biosynthesis of lysine and meso-diaminopimelic acid, an essential component of bacterial cell walls. In Xylella fastidiosa (strain M23), this protein is Succinyl-diaminopimelate desuccinylase.